We begin with the raw amino-acid sequence, 388 residues long: Probable mannan endo-1,4-beta-mannosidase A-1 (388 aa).

Residues 1–20 (MKLSPLMALAGLASAQLALA) form the signal peptide. Trp93 and Asn206 together coordinate substrate. The Proton donor role is filled by Glu207. Asn264 carries N-linked (GlcNAc...) asparagine glycosylation. Residue Tyr282 coordinates substrate. The Nucleophile role is filled by Glu315. Asn335 carries N-linked (GlcNAc...) asparagine glycosylation. A substrate-binding site is contributed by Trp345.

The protein belongs to the glycosyl hydrolase 5 (cellulase A) family.

It is found in the secreted. The enzyme catalyses Random hydrolysis of (1-&gt;4)-beta-D-mannosidic linkages in mannans, galactomannans and glucomannans.. Its function is as follows. Endo-1,4-mannanase, a crucial enzyme for depolymerization of seed galactomannans and wood galactoglucomannans. The chain is Probable mannan endo-1,4-beta-mannosidase A-1 (manA-1) from Aspergillus terreus (strain NIH 2624 / FGSC A1156).